Consider the following 644-residue polypeptide: Exoribonuclease 2 (644 aa).

One can recognise an RNB domain in the interval 189-516 (RRDLTALDFV…NHRLLKAIIK (328 aa)). Positions 561–643 (DTRFAAEILD…ETRSIIARPA (83 aa)) constitute an S1 motif domain.

This sequence belongs to the RNR ribonuclease family. RNase II subfamily.

It localises to the cytoplasm. The enzyme catalyses Exonucleolytic cleavage in the 3'- to 5'-direction to yield nucleoside 5'-phosphates.. In terms of biological role, involved in mRNA degradation. Hydrolyzes single-stranded polyribonucleotides processively in the 3' to 5' direction. The sequence is that of Exoribonuclease 2 from Klebsiella pneumoniae (strain 342).